Here is a 477-residue protein sequence, read N- to C-terminus: MSPQTETKASVGFQAGVKDYKLTYYTPEYETKDTDILAAFRVTPQPGVPPEEAGAAVAAESSTGTWTTVWTDGLTSLDRYKGRCYHIEPVAGEDNQWICYVAYPLDLFEEGSVTNMFTSIVGNVFGFKALRALRLEDLRIPPAYTKTFQGPPHGIQVERDKLNKYGRPLLGCTIKPKLGLSAKNYGRACYECLRGGLDFTKDDENVNSQPFMRWRDRFVFCAEAIYKAQAETGEIKGHYLNATAGTCEEMIKRAVFARELGVPIVMHDYITGGFTANTSLAHYCRDNGLLLHIHRAMHAVIDRQKNHGMHFRVLAKALRMSGGDHIHSGTVVGKLEGEREMTLGFVDLLRDDFIEKDRARGIFFTQDWVSMPGVIPVASGGIHVWHMPALTEIFGDDSVLQFGGGTLGHPWGNAPGAAANRVALEACVQARNEGRDLAREGNEIIREACKWSPELAAACEVWKAIKFEFEPVDTIDE.

Residues 1–2 (MS) constitute a propeptide that is removed on maturation. P3 carries the N-acetylproline modification. Substrate is bound by residues N123 and T173. K175 (proton acceptor) is an active-site residue. Position 177 (K177) interacts with substrate. 3 residues coordinate Mg(2+): K201, D203, and E204. N6-carboxylysine is present on K201. Catalysis depends on H294, which acts as the Proton acceptor. Substrate-binding residues include R295, H327, and S379.

This sequence belongs to the RuBisCO large chain family. Type I subfamily. In terms of assembly, heterohexadecamer of 8 large chains and 8 small chains; disulfide-linked. The disulfide link is formed within the large subunit homodimers. Requires Mg(2+) as cofactor. Post-translationally, the disulfide bond which can form in the large chain dimeric partners within the hexadecamer appears to be associated with oxidative stress and protein turnover.

It localises to the plastid. It is found in the chloroplast. The enzyme catalyses 2 (2R)-3-phosphoglycerate + 2 H(+) = D-ribulose 1,5-bisphosphate + CO2 + H2O. The catalysed reaction is D-ribulose 1,5-bisphosphate + O2 = 2-phosphoglycolate + (2R)-3-phosphoglycerate + 2 H(+). Functionally, ruBisCO catalyzes two reactions: the carboxylation of D-ribulose 1,5-bisphosphate, the primary event in carbon dioxide fixation, as well as the oxidative fragmentation of the pentose substrate in the photorespiration process. Both reactions occur simultaneously and in competition at the same active site. This is Ribulose bisphosphate carboxylase large chain from Avena sativa (Oat).